The sequence spans 100 residues: Omega-hexatoxin-Asp2a (100 aa).

The first 23 residues, 1-23 (MKFSKLSITLAVILTQAVFVLCG), serve as a signal peptide directing secretion. Positions 24–55 (MKNEDFMEKGLESNELHDAIKKPVNSGKPDTE) are excised as a propeptide. Disulfide bonds link Cys60-Cys73, Cys66-Cys79, and Cys72-Cys84.

This sequence belongs to the neurotoxin 15 family. 02 (omega-actx) subfamily. As to expression, expressed by the venom gland.

Its subcellular location is the secreted. Functionally, potent inhibitor of insect, but not mammalian, voltage-gated calcium channels (Cav). This is Omega-hexatoxin-Asp2a from Atrax sp. (strain Illawarra) (Funnel-web spider).